Here is a 290-residue protein sequence, read N- to C-terminus: Lipoyl synthase (290 aa).

Residues Cys34, Cys39, Cys45, Cys60, Cys64, Cys67, and Ser273 each coordinate [4Fe-4S] cluster. One can recognise a Radical SAM core domain in the interval 46–262 (WNKRHATVMI…KYIAYSKGFL (217 aa)).

Belongs to the radical SAM superfamily. Lipoyl synthase family. [4Fe-4S] cluster is required as a cofactor.

It localises to the cytoplasm. The catalysed reaction is [[Fe-S] cluster scaffold protein carrying a second [4Fe-4S](2+) cluster] + N(6)-octanoyl-L-lysyl-[protein] + 2 oxidized [2Fe-2S]-[ferredoxin] + 2 S-adenosyl-L-methionine + 4 H(+) = [[Fe-S] cluster scaffold protein] + N(6)-[(R)-dihydrolipoyl]-L-lysyl-[protein] + 4 Fe(3+) + 2 hydrogen sulfide + 2 5'-deoxyadenosine + 2 L-methionine + 2 reduced [2Fe-2S]-[ferredoxin]. Its pathway is protein modification; protein lipoylation via endogenous pathway; protein N(6)-(lipoyl)lysine from octanoyl-[acyl-carrier-protein]: step 2/2. Catalyzes the radical-mediated insertion of two sulfur atoms into the C-6 and C-8 positions of the octanoyl moiety bound to the lipoyl domains of lipoate-dependent enzymes, thereby converting the octanoylated domains into lipoylated derivatives. The sequence is that of Lipoyl synthase from Wolbachia pipientis subsp. Culex pipiens (strain wPip).